Consider the following 428-residue polypeptide: Glutamate-1-semialdehyde 2,1-aminomutase (428 aa).

Position 265 is an N6-(pyridoxal phosphate)lysine (K265).

The protein belongs to the class-III pyridoxal-phosphate-dependent aminotransferase family. HemL subfamily. As to quaternary structure, homodimer. Pyridoxal 5'-phosphate is required as a cofactor.

The protein localises to the cytoplasm. It catalyses the reaction (S)-4-amino-5-oxopentanoate = 5-aminolevulinate. Its pathway is porphyrin-containing compound metabolism; protoporphyrin-IX biosynthesis; 5-aminolevulinate from L-glutamyl-tRNA(Glu): step 2/2. This Vesicomyosocius okutanii subsp. Calyptogena okutanii (strain HA) protein is Glutamate-1-semialdehyde 2,1-aminomutase.